We begin with the raw amino-acid sequence, 180 residues long: Large ribosomal subunit protein uL5c (180 aa).

The protein belongs to the universal ribosomal protein uL5 family. As to quaternary structure, part of the 50S ribosomal subunit; contacts the 5S rRNA.

Its subcellular location is the plastid. It is found in the chloroplast. Binds 5S rRNA, forms part of the central protuberance of the 50S subunit. This chain is Large ribosomal subunit protein uL5c (rpl5), found in Oedogonium cardiacum (Filamentous green alga).